Consider the following 389-residue polypeptide: Formate-dependent phosphoribosylglycinamide formyltransferase (389 aa).

N(1)-(5-phospho-beta-D-ribosyl)glycinamide contacts are provided by residues 15–16 and Glu75; that span reads EL. Residues Arg107, Lys148, 153–158, 188–191, and Glu196 each bind ATP; these read SSGKGQ and EEFL. Positions 112–302 constitute an ATP-grasp domain; that stretch reads DLAAGELALR…EFELHLRAVL (191 aa). 2 residues coordinate Mg(2+): Glu261 and Glu273. Residues Asp280, Lys350, and 357–358 each bind N(1)-(5-phospho-beta-D-ribosyl)glycinamide; that span reads RR.

The protein belongs to the PurK/PurT family. As to quaternary structure, homodimer.

It catalyses the reaction N(1)-(5-phospho-beta-D-ribosyl)glycinamide + formate + ATP = N(2)-formyl-N(1)-(5-phospho-beta-D-ribosyl)glycinamide + ADP + phosphate + H(+). Its pathway is purine metabolism; IMP biosynthesis via de novo pathway; N(2)-formyl-N(1)-(5-phospho-D-ribosyl)glycinamide from N(1)-(5-phospho-D-ribosyl)glycinamide (formate route): step 1/1. Its function is as follows. Involved in the de novo purine biosynthesis. Catalyzes the transfer of formate to 5-phospho-ribosyl-glycinamide (GAR), producing 5-phospho-ribosyl-N-formylglycinamide (FGAR). Formate is provided by PurU via hydrolysis of 10-formyl-tetrahydrofolate. The sequence is that of Formate-dependent phosphoribosylglycinamide formyltransferase from Synechococcus sp. (strain WH7803).